A 496-amino-acid polypeptide reads, in one-letter code: ATP synthase subunit beta (496 aa).

155–162 (GGAGVGKT) contacts ATP.

It belongs to the ATPase alpha/beta chains family. As to quaternary structure, F-type ATPases have 2 components, CF(1) - the catalytic core - and CF(0) - the membrane proton channel. CF(1) has five subunits: alpha(3), beta(3), gamma(1), delta(1), epsilon(1). CF(0) has three main subunits: a(1), b(2) and c(9-12). The alpha and beta chains form an alternating ring which encloses part of the gamma chain. CF(1) is attached to CF(0) by a central stalk formed by the gamma and epsilon chains, while a peripheral stalk is formed by the delta and b chains.

The protein localises to the cell membrane. It carries out the reaction ATP + H2O + 4 H(+)(in) = ADP + phosphate + 5 H(+)(out). In terms of biological role, produces ATP from ADP in the presence of a proton gradient across the membrane. The catalytic sites are hosted primarily by the beta subunits. This is ATP synthase subunit beta from Karelsulcia muelleri (strain GWSS) (Sulcia muelleri).